Here is a 480-residue protein sequence, read N- to C-terminus: MKGVWYRGLSSIDGPIVVAKRREGAFYGEITAIRDRFGALRTGRIIDLSQECCLIQVFGSTLGLSLDGACLEFLDVPMQLRVCEGLMGRVFDGLGRPIDGFPEVLSSQLRNVNGYPINPYARVYPRDFIQTGISAIDGMNTLIRGQKLPIFSGNGLAHNRLAAQIIRQAKILGTDEAFVMVFAGMGIKHDVARFFVSSFEETGVLSKVVMFLSLADAPSIERIITPRCALTAAEYLAFEKNKHVLVIFTDMTNYCEALREVSTTRGEVPGRKGYPGYLYSDLAELYERAGRVKGSSGSVTQIPILTMPNDDISHPIPDLTGYITEGQIVLQRDLSQRGLYPPIGCLPSLSRLMKDGIGEGMTRADHHAVSSQLFASYARVQSVRSLASIVGEEELPALDKCYLRFGDLFEQYFLTQDEHEDRSISQTLDIGWSLLSLLPRTELYRIDPKLIDQYLTASCSAVSDQLRKAIEEARTPVADA.

This sequence belongs to the ATPase alpha/beta chains family.

In terms of biological role, produces ATP from ADP in the presence of a proton gradient across the membrane. The V-type beta chain is a regulatory subunit. The protein is V-type ATP synthase beta chain 2 (atpB2) of Treponema pallidum (strain Nichols).